The primary structure comprises 161 residues: 6,7-dimethyl-8-ribityllumazine synthase (161 aa).

5-amino-6-(D-ribitylamino)uracil-binding positions include Trp-26, Ser-58 to Glu-60, and Val-81 to Ile-83. Gly-86 to Thr-87 lines the (2S)-2-hydroxy-3-oxobutyl phosphate pocket. The active-site Proton donor is the His-89. Position 114 (Phe-114) interacts with 5-amino-6-(D-ribitylamino)uracil. Arg-128 lines the (2S)-2-hydroxy-3-oxobutyl phosphate pocket.

Belongs to the DMRL synthase family.

It catalyses the reaction (2S)-2-hydroxy-3-oxobutyl phosphate + 5-amino-6-(D-ribitylamino)uracil = 6,7-dimethyl-8-(1-D-ribityl)lumazine + phosphate + 2 H2O + H(+). It functions in the pathway cofactor biosynthesis; riboflavin biosynthesis; riboflavin from 2-hydroxy-3-oxobutyl phosphate and 5-amino-6-(D-ribitylamino)uracil: step 1/2. Its function is as follows. Catalyzes the formation of 6,7-dimethyl-8-ribityllumazine by condensation of 5-amino-6-(D-ribitylamino)uracil with 3,4-dihydroxy-2-butanone 4-phosphate. This is the penultimate step in the biosynthesis of riboflavin. In Streptomyces coelicolor (strain ATCC BAA-471 / A3(2) / M145), this protein is 6,7-dimethyl-8-ribityllumazine synthase.